The following is an 894-amino-acid chain: Phosphoenolpyruvate carboxylase (894 aa).

Active-site residues include His143 and Lys556.

Belongs to the PEPCase type 1 family. Mg(2+) is required as a cofactor.

It carries out the reaction oxaloacetate + phosphate = phosphoenolpyruvate + hydrogencarbonate. Functionally, forms oxaloacetate, a four-carbon dicarboxylic acid source for the tricarboxylic acid cycle. In Acinetobacter baylyi (strain ATCC 33305 / BD413 / ADP1), this protein is Phosphoenolpyruvate carboxylase.